The primary structure comprises 1222 residues: BOS complex subunit NOMO1 (1222 aa).

A signal peptide spans 1-31 (MLVGQGAGPLGPAVVTAAVVLLLSGVGPAHG). Residues 32–1155 (SEDIVVGCGG…NPTRKLPEQD (1124 aa)) are Extracellular-facing. 3 N-linked (GlcNAc...) asparagine glycosylation sites follow: Asn-50, Asn-218, and Asn-618. The helical transmembrane segment at 1156–1176 (IAQGSYIALPLTLLVLLAGYN) threads the bilayer. Topologically, residues 1177 to 1222 (HDKLIPLLLQLTSRLQGVRALGQAASDNSGPEDAKRQAKKQKTRRT) are cytoplasmic. Residues 1198-1222 (GQAASDNSGPEDAKRQAKKQKTRRT) form a disordered region. Residue Ser-1205 is modified to Phosphoserine. Residues 1213–1222 (QAKKQKTRRT) show a composition bias toward basic residues.

In terms of assembly, component of the back of Sec61 (BOS) complex, composed of NCLN/Nicalin, NOMO (NOMO1, NOMO2 or NOMO3) and TMEM147. The BOS complex is part of the multi-pass translocon (MPT) complex, composed of three subcomplexes, the GEL complex (composed of RAB5IF/OPTI and TMCO1), the BOS complex (composed of NCLN/Nicalin, NOMO and TMEM147) and the PAT complex (composed of WDR83OS/Asterix and CCDC47). The MPT complex associates with the SEC61 complex. Due to the strong similarity between NOMO1, NOMO2 and NOMO3, similar interaction pattern probably occur for the three gene copies. Expressed in colon tumor tissue and in adjacent normal colonic mucosa.

It is found in the endoplasmic reticulum membrane. Its function is as follows. Component of the multi-pass translocon (MPT) complex that mediates insertion of multi-pass membrane proteins into the lipid bilayer of membranes. The MPT complex takes over after the SEC61 complex: following membrane insertion of the first few transmembrane segments of proteins by the SEC61 complex, the MPT complex occludes the lateral gate of the SEC61 complex to promote insertion of subsequent transmembrane regions. In Homo sapiens (Human), this protein is BOS complex subunit NOMO1 (NOMO1).